Here is a 287-residue protein sequence, read N- to C-terminus: Aromatic amino acid exporter YddG (287 aa).

Residues 1 to 5 (MSRSS) are Cytoplasmic-facing. The helical transmembrane segment at 6–24 (ATLIGFTAILLWSTLALAT) threads the bilayer. An EamA 1 domain is found at 7 to 136 (TLIGFTAILL…MGLAGTVVLL (130 aa)). Residues 25–31 (SSTGAVP) lie on the Periplasmic side of the membrane. Residues 32 to 54 (PFLLTALTFTIGGAVGIAAGLAR) traverse the membrane as a helical segment. At 55–65 (GVGLSVLRQPW) the chain is on the cytoplasmic side. A helical transmembrane segment spans residues 66–86 (PVWVHGIGGLFGYHFFYFSAL). Topologically, residues 87 to 90 (KLAP) are periplasmic. A helical membrane pass occupies residues 91 to 111 (PAEAGLVAYLWPLLIVLFSAF). Over 112-118 (LPGERLR) the chain is Cytoplasmic. The helical transmembrane segment at 119-139 (PAHVAGALMGLAGTVVLLGAR) threads the bilayer. The Periplasmic portion of the chain corresponds to 140–149 (AGGFGFAPEY). The helical transmembrane segment at 150–170 (VPGYLAAAACAVIWSVYSVAS) threads the bilayer. The EamA 2 domain occupies 151–281 (PGYLAAAACA…ALIVGGAAVA (131 aa)). Topologically, residues 171 to 176 (RRFARV) are cytoplasmic. Residues 177–198 (PTEVVAGFCLATAALSALCHIL) form a helical membrane-spanning segment. The Periplasmic segment spans residues 199-208 (FEPSVWPVGS). Residues 209-233 (EWLAVVALGIGPVGIAFYTWDIGMK) traverse the membrane as a helical segment. The Cytoplasmic segment spans residues 234 to 236 (RGD). The chain crosses the membrane as a helical span at residues 237-258 (VRLLGVLSYAAPVLSTLLLVVA). Residues 259–264 (GFAAPS) lie on the Periplasmic side of the membrane. Residues 265 to 284 (GALAIACALIVGGAAVATLL) form a helical membrane-spanning segment. The Cytoplasmic segment spans residues 285 to 287 (ARR).

This sequence belongs to the drug/metabolite transporter (DMT) superfamily. Aromatic amino acid/paraquat exporter (ArAA/P-E) (TC 2.A.7.17) family.

It is found in the cell inner membrane. It catalyses the reaction L-threonine(in) = L-threonine(out). It carries out the reaction L-methionine(in) = L-methionine(out). The enzyme catalyses L-lysine(in) = L-lysine(out). The catalysed reaction is L-glutamate(out) = L-glutamate(in). In terms of biological role, amino acid transporter with broad substrate specificity. Can transport various amino acids, including L-threonine, L-methionine, L-lysine and L-glutamate. The protein is Aromatic amino acid exporter YddG of Ancylobacter novellus (strain ATCC 8093 / DSM 506 / JCM 20403 / CCM 1077 / IAM 12100 / NBRC 12443 / NCIMB 10456) (Starkeya novella).